Here is a 462-residue protein sequence, read N- to C-terminus: Putative ABC transporter A445L (462 aa).

Belongs to the protein kinase superfamily. ADCK protein kinase family.

The chain is Putative ABC transporter A445L from Chlorella (PBCV-1).